Reading from the N-terminus, the 365-residue chain is tRNA(Met) cytidine acetate ligase (365 aa).

ATP contacts are provided by residues 7-20 (IAEF…HKYL), Gly-96, Asn-152, and Arg-175.

This sequence belongs to the TmcAL family.

It localises to the cytoplasm. It carries out the reaction cytidine(34) in elongator tRNA(Met) + acetate + ATP = N(4)-acetylcytidine(34) in elongator tRNA(Met) + AMP + diphosphate. Functionally, catalyzes the formation of N(4)-acetylcytidine (ac(4)C) at the wobble position of elongator tRNA(Met), using acetate and ATP as substrates. First activates an acetate ion to form acetyladenylate (Ac-AMP) and then transfers the acetyl group to tRNA to form ac(4)C34. The protein is tRNA(Met) cytidine acetate ligase of Streptococcus pneumoniae (strain Taiwan19F-14).